The following is a 237-amino-acid chain: NAD-dependent protein deacetylase (237 aa).

Residues 1–237 enclose the Deacetylase sirtuin-type domain; it reads MQDITQAEAI…TIFAELTIKE (237 aa). Positions 25, 29, 37, 100, 102, 103, and 118 each coordinate NAD(+). Nicotinamide-binding residues include Ile102 and Asp103. His118 serves as the catalytic Proton acceptor. Positions 126, 129, 144, and 147 each coordinate Zn(2+). Residues Thr185, Ser186, and Asn209 each contribute to the NAD(+) site.

It belongs to the sirtuin family. Class U subfamily.

Its subcellular location is the cytoplasm. The enzyme catalyses N(6)-acetyl-L-lysyl-[protein] + NAD(+) + H2O = 2''-O-acetyl-ADP-D-ribose + nicotinamide + L-lysyl-[protein]. NAD-dependent protein deacetylase which modulates the activities of several enzymes which are inactive in their acetylated form. The chain is NAD-dependent protein deacetylase from Enterococcus faecalis (strain ATCC 700802 / V583).